The following is a 296-amino-acid chain: Phosphoribosylaminoimidazole-succinocarboxamide synthase (296 aa).

The protein belongs to the SAICAR synthetase family.

It catalyses the reaction 5-amino-1-(5-phospho-D-ribosyl)imidazole-4-carboxylate + L-aspartate + ATP = (2S)-2-[5-amino-1-(5-phospho-beta-D-ribosyl)imidazole-4-carboxamido]succinate + ADP + phosphate + 2 H(+). The protein operates within purine metabolism; IMP biosynthesis via de novo pathway; 5-amino-1-(5-phospho-D-ribosyl)imidazole-4-carboxamide from 5-amino-1-(5-phospho-D-ribosyl)imidazole-4-carboxylate: step 1/2. This is Phosphoribosylaminoimidazole-succinocarboxamide synthase from Citrifermentans bemidjiense (strain ATCC BAA-1014 / DSM 16622 / JCM 12645 / Bem) (Geobacter bemidjiensis).